A 263-amino-acid chain; its full sequence is Palmitoyltransferase ZDHHC22 (263 aa).

Over 1-9 (MLALRLLNV) the chain is Cytoplasmic. The chain crosses the membrane as a helical span at residues 10-30 (VAPAYFLCISLVTFVLQLFLF). The Lumenal segment spans residues 31–47 (LPSMREDPTATPLFSPA). Residues 48-68 (VLHGALFLFLSANALGNYILV) traverse the membrane as a helical segment. Over 69-125 (VQNSPDDLGACQGTSSQRPQRPPPSTHFCRVCARVTLRHDHHCFFTGNCIGSRNMRN) the chain is Cytoplasmic. A DHHC domain is found at 91-131 (PPSTHFCRVCARVTLRHDHHCFFTGNCIGSRNMRNFILFCL). Residue Cys111 is the S-palmitoyl cysteine intermediate of the active site. 2 consecutive transmembrane segments (helical) span residues 126–146 (FILFCLYTSLACLYSMVAGVA) and 147–167 (YISAVLSISFAHPLAFLTLLP). Residues 168–182 (TSISQFFSGAVLGSD) are Cytoplasmic-facing. Residues 183 to 203 (MFVILMLYLWFAVGLACAGFC) traverse the membrane as a helical segment. Topologically, residues 204 to 263 (CHQLLLILRGQTRYQVRKGVAVRARPWRKNLQEVFGKRWLLGLLVPMFNVGTESSKQQDK) are lumenal.

It belongs to the DHHC palmitoyltransferase family. In terms of assembly, interacts with CNN3.

Its subcellular location is the endoplasmic reticulum membrane. The protein resides in the golgi apparatus membrane. The catalysed reaction is L-cysteinyl-[protein] + hexadecanoyl-CoA = S-hexadecanoyl-L-cysteinyl-[protein] + CoA. Palmitoyltransferase that could catalyze the addition of palmitate onto various protein substrates and be involved in a variety of cellular processes. Catalyzes the palmitoylation of KCNMA1, regulating localization of KCNMA1 to the plasma membrane. Might also mediate palmitoylation of CNN3. This chain is Palmitoyltransferase ZDHHC22, found in Rattus norvegicus (Rat).